The chain runs to 412 residues: Gamma-glutamyl phosphate reductase (412 aa).

Belongs to the gamma-glutamyl phosphate reductase family.

The protein localises to the cytoplasm. The enzyme catalyses L-glutamate 5-semialdehyde + phosphate + NADP(+) = L-glutamyl 5-phosphate + NADPH + H(+). It functions in the pathway amino-acid biosynthesis; L-proline biosynthesis; L-glutamate 5-semialdehyde from L-glutamate: step 2/2. Functionally, catalyzes the NADPH-dependent reduction of L-glutamate 5-phosphate into L-glutamate 5-semialdehyde and phosphate. The product spontaneously undergoes cyclization to form 1-pyrroline-5-carboxylate. The chain is Gamma-glutamyl phosphate reductase from Lactiplantibacillus plantarum (strain ATCC BAA-793 / NCIMB 8826 / WCFS1) (Lactobacillus plantarum).